The chain runs to 105 residues: Large ribosomal subunit protein eL42 (105 aa).

A disordered region spans residues 23-52; the sequence is KVTQYKKGKESRLAQGRRRYDSKQKGFGGQ. The segment covering 29-46 has biased composition (basic and acidic residues); the sequence is KGKESRLAQGRRRYDSKQ.

This sequence belongs to the eukaryotic ribosomal protein eL42 family.

The protein is Large ribosomal subunit protein eL42 (rpl-44) of Brugia malayi (Filarial nematode worm).